The chain runs to 146 residues: Hemoglobin subunit beta (146 aa).

Val-1 carries the post-translational modification N-acetylvaline. Positions 2–146 (HLSGEEKTAL…VANALAHKYH (145 aa)) constitute a Globin domain. Ser-44 carries the post-translational modification Phosphoserine. At Lys-59 the chain carries N6-acetyllysine. Residue His-63 participates in heme b binding. Residue Lys-82 is modified to N6-acetyllysine. His-92 contacts heme b. Residue Cys-93 is modified to S-nitrosocysteine. Residue Lys-144 is modified to N6-acetyllysine.

The protein belongs to the globin family. In terms of assembly, heterotetramer of two alpha chains and two beta chains. In terms of tissue distribution, red blood cells.

Functionally, involved in oxygen transport from the lung to the various peripheral tissues. The polypeptide is Hemoglobin subunit beta (Tamiasciurus hudsonicus (American red squirrel)).